We begin with the raw amino-acid sequence, 378 residues long: Acetylornithine deacetylase (378 aa).

His-76 lines the Zn(2+) pocket. Asp-78 is a catalytic residue. Asp-108 is a Zn(2+) binding site. Glu-140 is an active-site residue. Residues Glu-141, Glu-165, and His-351 each contribute to the Zn(2+) site.

The protein belongs to the peptidase M20A family. ArgE subfamily. In terms of assembly, homodimer. Zn(2+) is required as a cofactor. Requires Co(2+) as cofactor. The cofactor is glutathione.

The protein localises to the cytoplasm. The enzyme catalyses N(2)-acetyl-L-ornithine + H2O = L-ornithine + acetate. The protein operates within amino-acid biosynthesis; L-arginine biosynthesis; L-ornithine from N(2)-acetyl-L-ornithine (linear): step 1/1. In terms of biological role, catalyzes the hydrolysis of the amide bond of N(2)-acetylated L-amino acids. Cleaves the acetyl group from N-acetyl-L-ornithine to form L-ornithine, an intermediate in L-arginine biosynthesis pathway, and a branchpoint in the synthesis of polyamines. The polypeptide is Acetylornithine deacetylase (Aliivibrio fischeri (strain ATCC 700601 / ES114) (Vibrio fischeri)).